A 374-amino-acid polypeptide reads, in one-letter code: MYKFYKHKLYKKYQDELWGHIISKKSFSYNKKSILLNYRDIILRNRLRIKTKFKYFRRGFLKNLNYTLLLFKFFRKNIRVFSFKRRQSLSVPLSLSSKRFKTKRKVFFKTSKIASLLKFNIFYANTVAFNKVFIKHNYCLSSCSNIYTQTKLLYFPIISVNRGLVFYKSKNFLRVNNLQFVIKKKLNLRKQKIFFYSVHIAAPKKKTKKWSLFALKNIYYKKVSLFFGFRKVVDFFKVYNLAGALAKGNSFAVFLMLEGRLENFLMRLNLFPSIYFIKKFIEYGNVFVNNKIINYTSYHLNFNEIVSFNKKYYKKLYFFIKSKLRQRKVIINAPSFVEVDYKLLVAMLIRNPDELALTKPLSFNLYTKFLSVNR.

Residues 259-323 (GRLENFLMRL…KKLYFFIKSK (65 aa)) enclose the S4 RNA-binding domain.

Belongs to the universal ribosomal protein uS4 family.

Its subcellular location is the mitochondrion. The polypeptide is Small ribosomal subunit protein uS4m (RPS4) (Acanthamoeba castellanii (Amoeba)).